Reading from the N-terminus, the 394-residue chain is Nicotinate phosphoribosyltransferase (394 aa).

Position 218 is a phosphohistidine; by autocatalysis (His218).

Belongs to the NAPRTase family. In terms of processing, transiently phosphorylated on a His residue during the reaction cycle. Phosphorylation strongly increases the affinity for substrates and increases the rate of nicotinate D-ribonucleotide production. Dephosphorylation regenerates the low-affinity form of the enzyme, leading to product release.

The enzyme catalyses nicotinate + 5-phospho-alpha-D-ribose 1-diphosphate + ATP + H2O = nicotinate beta-D-ribonucleotide + ADP + phosphate + diphosphate. The protein operates within cofactor biosynthesis; NAD(+) biosynthesis; nicotinate D-ribonucleotide from nicotinate: step 1/1. In terms of biological role, catalyzes the synthesis of beta-nicotinate D-ribonucleotide from nicotinate and 5-phospho-D-ribose 1-phosphate at the expense of ATP. This Xylella fastidiosa (strain Temecula1 / ATCC 700964) protein is Nicotinate phosphoribosyltransferase.